Here is a 306-residue protein sequence, read N- to C-terminus: Plant-type L-asparaginase (306 aa).

Threonine 176 acts as the Nucleophile in catalysis. Substrate contacts are provided by residues 203–206 (RVGD) and 225–228 (TGLG).

The protein belongs to the Ntn-hydrolase family. As to quaternary structure, heterotetramer of two alpha and two beta chains arranged as a dimer of alpha/beta heterodimers. The uncleaved protein forms homodimers. In terms of processing, autocleaved. Generates the alpha and beta subunits. The N-terminal residue of the beta subunit is thought to be responsible for the nucleophile hydrolase activity. Predominantly produced in the uncleaved form when gene expression is induced at 37 degrees Celsius with 0.5 mM IPTG. When produced at 42 degrees Celsius without adding IPTG, approximately 90% of the protein is found in the cleaved form, while the remaining 10% is observed as uncleaved precursor. Undergoes complete auto-cleavage within 24 hours at 37 degrees Celsius.

It catalyses the reaction L-asparagine + H2O = L-aspartate + NH4(+). Undergoes auto-cleavage in a temperature-dependent and glycine-independent manner. Metal ions and EDTA do not have any significant effect on enzyme activity, indicating that activity is metal-independent. Its function is as follows. Catalyzes the hydrolysis of L-asparagine into L-aspartate and ammonia. Also displays D-asparaginase activity, which is about 10% of the L-asparaginase activity. Does not exhibit glutaminase activity. The sequence is that of Plant-type L-asparaginase from Thermococcus kodakarensis (strain ATCC BAA-918 / JCM 12380 / KOD1) (Pyrococcus kodakaraensis (strain KOD1)).